We begin with the raw amino-acid sequence, 127 residues long: Small ribosomal subunit protein uS11 (127 aa).

Belongs to the universal ribosomal protein uS11 family. In terms of assembly, part of the 30S ribosomal subunit. Interacts with proteins S7 and S18. Binds to IF-3.

Located on the platform of the 30S subunit, it bridges several disparate RNA helices of the 16S rRNA. Forms part of the Shine-Dalgarno cleft in the 70S ribosome. The polypeptide is Small ribosomal subunit protein uS11 (Streptococcus agalactiae serotype Ia (strain ATCC 27591 / A909 / CDC SS700)).